A 360-amino-acid chain; its full sequence is Glycoprotein-N-acetylgalactosamine 3-beta-galactosyltransferase 1 (360 aa).

The Cytoplasmic portion of the chain corresponds to 1–7 (MSIICAK). Residues 8-28 (VAWLPLTLGTAMGFLITFYLA) form a helical; Signal-anchor for type II membrane protein membrane-spanning segment. Residues 29–360 (RTLLERNSQP…SDFLEPPMES (332 aa)) lie on the Lumenal side of the membrane. Cysteine 79 and cysteine 103 are oxidised to a cystine. The UDP site is built by methionine 82, glutamate 126, glycine 127, arginine 128, and lysine 134. N-linked (GlcNAc...) asparagine glycosylation occurs at asparagine 148. UDP is bound at residue aspartate 157. Mn(2+)-binding residues include aspartate 157 and aspartate 159. An N-linked (GlcNAc...) asparagine glycan is attached at asparagine 173. A disulfide bridge links cysteine 220 with cysteine 234. Tryptophan 274 contacts a glycoprotein. Cysteines 289 and 290 form a disulfide. Positions 298 and 299 each coordinate UDP. Histidine 298 is a Mn(2+) binding site. N-linked (GlcNAc...) asparagine glycans are attached at residues asparagine 341 and asparagine 347.

It belongs to the glycosyltransferase 31 family. Beta3-Gal-T subfamily. In terms of assembly, homodimer; disulfide-linked. Mn(2+) is required as a cofactor.

The protein localises to the membrane. It carries out the reaction an N-acetyl-alpha-D-galactosaminyl derivative + UDP-alpha-D-galactose = a beta-D-galactosyl-(1-&gt;3)-N-acetyl-alpha-D-galactosaminyl derivative + UDP + H(+). It functions in the pathway protein modification; protein glycosylation. Functionally, glycosyltransferase that generates the core 1 O-glycan Gal-beta1-3GalNAc-alpha1-Ser/Thr (T antigen), which is a precursor for many extended O-glycans in glycoproteins. The chain is Glycoprotein-N-acetylgalactosamine 3-beta-galactosyltransferase 1 (c1galt1) from Xenopus laevis (African clawed frog).